The sequence spans 427 residues: Gamma-glutamyl phosphate reductase (427 aa).

Belongs to the gamma-glutamyl phosphate reductase family.

The protein resides in the cytoplasm. It catalyses the reaction L-glutamate 5-semialdehyde + phosphate + NADP(+) = L-glutamyl 5-phosphate + NADPH + H(+). Its pathway is amino-acid biosynthesis; L-proline biosynthesis; L-glutamate 5-semialdehyde from L-glutamate: step 2/2. Its function is as follows. Catalyzes the NADPH-dependent reduction of L-glutamate 5-phosphate into L-glutamate 5-semialdehyde and phosphate. The product spontaneously undergoes cyclization to form 1-pyrroline-5-carboxylate. The polypeptide is Gamma-glutamyl phosphate reductase (Rhizobium etli (strain ATCC 51251 / DSM 11541 / JCM 21823 / NBRC 15573 / CFN 42)).